Consider the following 187-residue polypeptide: Elongation factor P (187 aa).

The protein belongs to the elongation factor P family.

Its subcellular location is the cytoplasm. Its pathway is protein biosynthesis; polypeptide chain elongation. In terms of biological role, involved in peptide bond synthesis. Stimulates efficient translation and peptide-bond synthesis on native or reconstituted 70S ribosomes in vitro. Probably functions indirectly by altering the affinity of the ribosome for aminoacyl-tRNA, thus increasing their reactivity as acceptors for peptidyl transferase. The polypeptide is Elongation factor P (Acidothermus cellulolyticus (strain ATCC 43068 / DSM 8971 / 11B)).